The following is a 47-amino-acid chain: Laccase-2d (47 aa).

In terms of domain architecture, Plastocyanin-like spans 2 to 47; the sequence is TGPVADLHIINKDLSPDGFQRPTVVAGGGRDVVSIGRAGDNVTIRF.

Belongs to the multicopper oxidase family. As to quaternary structure, homodimer. Cu cation is required as a cofactor. N-glycosylated; contains 17% carbohydrates.

It localises to the secreted. The catalysed reaction is 4 hydroquinone + O2 = 4 benzosemiquinone + 2 H2O. Inhibited by sodium azide, SDS and mercaptoethanol, but not by 4-hexyl resocinol, L-cysteine and dithiothreitol. Activity is inhibited by the heavy metal ions Cr, W, Sn, Ag(+) and Hg(2+), but not by Pb(2+), Fe(3+), Ni(2+), Li(2+), Co(2+) or Cd(2+). Lignin degradation and detoxification of lignin-derived products. Has highest activity towards ABTS, also active towards ferulic acid and guaiacol, but is not active towards tyrosine, vanillic acid, 2,5-dimethyl aniline, p-anisidine or violuric acid. This chain is Laccase-2d, found in Cerrena unicolor (Canker rot fungus).